We begin with the raw amino-acid sequence, 409 residues long: N-acetylglucosamine-6-phosphate deacetylase (409 aa).

E143 serves as a coordination point for a divalent metal cation. Residue A154–H155 participates in substrate binding. 2 residues coordinate a divalent metal cation: H211 and H232. Substrate contacts are provided by residues N235–A236, R243, and D269–H272. The active-site Proton donor/acceptor is D294. L328–G330 provides a ligand contact to substrate.

This sequence belongs to the metallo-dependent hydrolases superfamily. NagA family. It depends on a divalent metal cation as a cofactor.

The enzyme catalyses N-acetyl-D-glucosamine 6-phosphate + H2O = D-glucosamine 6-phosphate + acetate. It participates in amino-sugar metabolism; N-acetylneuraminate degradation. Its function is as follows. Hydrolyzes the N-glycolyl group from N-glycolylglucosamine 6-phosphate (GlcNGc-6-P) in the N-glycolylneuraminic acid (Neu5Gc) degradation pathway. Although human is not able to catalyze formation of Neu5Gc due to the inactive CMAHP enzyme, Neu5Gc is present in food and must be degraded. The sequence is that of N-acetylglucosamine-6-phosphate deacetylase (AMDHD2) from Homo sapiens (Human).